A 211-amino-acid chain; its full sequence is ATP-dependent dethiobiotin synthetase BioD (211 aa).

An ATP-binding site is contributed by 13-18 (GVGKTV). Threonine 17 is a Mg(2+) binding site. Lysine 33 is a catalytic residue. Residues cysteine 47 and glutamate 101 each contribute to the Mg(2+) site. ATP-binding positions include 101-104 (EGAG), 185-187 (PWL), and asparagine 192.

Belongs to the dethiobiotin synthetase family. In terms of assembly, homodimer. Requires Mg(2+) as cofactor.

It localises to the cytoplasm. The catalysed reaction is (7R,8S)-7,8-diammoniononanoate + CO2 + ATP = (4R,5S)-dethiobiotin + ADP + phosphate + 3 H(+). It functions in the pathway cofactor biosynthesis; biotin biosynthesis; biotin from 7,8-diaminononanoate: step 1/2. Catalyzes a mechanistically unusual reaction, the ATP-dependent insertion of CO2 between the N7 and N8 nitrogen atoms of 7,8-diaminopelargonic acid (DAPA, also called 7,8-diammoniononanoate) to form a ureido ring. In Bradyrhizobium diazoefficiens (strain JCM 10833 / BCRC 13528 / IAM 13628 / NBRC 14792 / USDA 110), this protein is ATP-dependent dethiobiotin synthetase BioD.